A 253-amino-acid chain; its full sequence is Short-chain dehydrogenase/reductase ATR9 (253 aa).

NADP(+) is bound by residues Ser-15, Ser-16, Ile-18, Ser-38, Asn-39, Arg-42, Asp-65, and Lys-129. Ser-147 acts as the Proton donor in catalysis. Thr-194 lines the NADP(+) pocket.

This sequence belongs to the short-chain dehydrogenases/reductases (SDR) family.

It participates in mycotoxin biosynthesis. Functionally, short-chain dehydrogenase/reductase; part of the core atranone cluster (CAC) which products are predicted to catalyze most or all steps of mycotoxin atranone synthesis, starting from geranylgeranyl pyrophosphate (GGPP). The initial cyclization of GGPP to dolabellane is probably performed by the terpene cyclase ATR13. The Baeyer-Villiger oxidation near the end of the atranone synthesis, which converts atranones D and E to atranones F and G is predicted to be catalyzed by the monooxygenase ATR8. Of the CAC's other predicted gene products, the reducing PKS ATR6 might synthesize a polyketide chain. This polyketide is probably transferred onto the atranone backbone by the polyketide transferase ATR5. Other predicted CAC products include 4 oxygenases (ATR2, ATR3, ATR4, and ATR14), 3 short-chain reductases (ATR7, ATR9, and ATR10), and a methyltransferase (ATR12). These may all be involved in the various steps of atranone biosynthesis, although their specific roles must await experimental determination. The polypeptide is Short-chain dehydrogenase/reductase ATR9 (Stachybotrys chlorohalonatus (strain IBT 40285)).